Reading from the N-terminus, the 172-residue chain is uncharacterized protein (172 aa).

Residues 109 to 129 (MLLLYLYYNLLLLTASTPLTF) form a helical membrane-spanning segment.

It localises to the membrane. This is an uncharacterized protein from Saccharomyces cerevisiae (strain ATCC 204508 / S288c) (Baker's yeast).